A 287-amino-acid chain; its full sequence is tRNA-cytidine(32) 2-sulfurtransferase (287 aa).

The short motif at 58–63 (SGGKDS) is the PP-loop motif element. Cys133, Cys136, and Cys224 together coordinate [4Fe-4S] cluster.

It belongs to the TtcA family. Homodimer. It depends on Mg(2+) as a cofactor. [4Fe-4S] cluster serves as cofactor.

It localises to the cytoplasm. The enzyme catalyses cytidine(32) in tRNA + S-sulfanyl-L-cysteinyl-[cysteine desulfurase] + AH2 + ATP = 2-thiocytidine(32) in tRNA + L-cysteinyl-[cysteine desulfurase] + A + AMP + diphosphate + H(+). It participates in tRNA modification. Catalyzes the ATP-dependent 2-thiolation of cytidine in position 32 of tRNA, to form 2-thiocytidine (s(2)C32). The sulfur atoms are provided by the cysteine/cysteine desulfurase (IscS) system. This is tRNA-cytidine(32) 2-sulfurtransferase from Dinoroseobacter shibae (strain DSM 16493 / NCIMB 14021 / DFL 12).